We begin with the raw amino-acid sequence, 183 residues long: Mitochondrial inner membrane protease subunit 2 (183 aa).

Residues 13–35 form a helical membrane-spanning segment; sequence AFVSGFFVAVPVTVTVLDRLAYV. Residues Ser42 and Lys90 contribute to the active site. Positions 161–183 are disordered; that stretch reads SVPPDRRPLLNWDRAAEDKYDDD. Positions 164-183 are enriched in basic and acidic residues; that stretch reads PDRRPLLNWDRAAEDKYDDD.

This sequence belongs to the peptidase S26 family. IMP2 subfamily. In terms of assembly, heterodimer of 2 subunits, IMMPL1 and IMMPL2.

It localises to the mitochondrion inner membrane. Its function is as follows. Catalyzes the removal of transit peptides required for the targeting of proteins from the mitochondrial matrix, across the inner membrane, into the inter-membrane space. The protein is Mitochondrial inner membrane protease subunit 2 (immp2l) of Danio rerio (Zebrafish).